The following is a 261-amino-acid chain: Cytochrome c oxidase subunit 3 (261 aa).

The Mitochondrial matrix portion of the chain corresponds to 1-15 (MTHQTHAYHMVNPSP). Residues 16–34 (WPLTGALSALLLTSGLMMW) form a helical membrane-spanning segment. Topologically, residues 35-40 (FHFNNP) are mitochondrial intermembrane. A helical membrane pass occupies residues 41-66 (TLLVLGLLTNLISSYQWWRDIVREGT). Residues 67 to 72 (YQGHHT) are Mitochondrial matrix-facing. A helical transmembrane segment spans residues 73–105 (KVVQKGLRYGMVLFIISEVFFFLGFFWAFYHSS). Residues 106-128 (LAPTPELGGCWPPTGISPLNPLE) lie on the Mitochondrial intermembrane side of the membrane. Residues 129-152 (VPLLNTSILLASGVSITWSHHSLM) form a helical membrane-spanning segment. Residues 153–155 (EGN) lie on the Mitochondrial matrix side of the membrane. Residues 156-183 (RKQMIQALMITIALGLYFTALQAMEYYE) traverse the membrane as a helical segment. The Mitochondrial intermembrane segment spans residues 184-190 (SSFTISD). The chain crosses the membrane as a helical span at residues 191-223 (GVYGSTFFVATGFHGLHVIIGTTFLITCLLRQL). Over 224 to 232 (LYHFTSNHH) the chain is Mitochondrial matrix. A helical membrane pass occupies residues 233–256 (FGFEAAAWYWHFVDVVWLFLYVSI). At 257 to 261 (YWWGS) the chain is on the mitochondrial intermembrane side.

The protein belongs to the cytochrome c oxidase subunit 3 family. In terms of assembly, component of the cytochrome c oxidase (complex IV, CIV), a multisubunit enzyme composed of 14 subunits. The complex is composed of a catalytic core of 3 subunits MT-CO1, MT-CO2 and MT-CO3, encoded in the mitochondrial DNA, and 11 supernumerary subunits COX4I, COX5A, COX5B, COX6A, COX6B, COX6C, COX7A, COX7B, COX7C, COX8 and NDUFA4, which are encoded in the nuclear genome. The complex exists as a monomer or a dimer and forms supercomplexes (SCs) in the inner mitochondrial membrane with NADH-ubiquinone oxidoreductase (complex I, CI) and ubiquinol-cytochrome c oxidoreductase (cytochrome b-c1 complex, complex III, CIII), resulting in different assemblies (supercomplex SCI(1)III(2)IV(1) and megacomplex MCI(2)III(2)IV(2)).

The protein resides in the mitochondrion inner membrane. The enzyme catalyses 4 Fe(II)-[cytochrome c] + O2 + 8 H(+)(in) = 4 Fe(III)-[cytochrome c] + 2 H2O + 4 H(+)(out). Component of the cytochrome c oxidase, the last enzyme in the mitochondrial electron transport chain which drives oxidative phosphorylation. The respiratory chain contains 3 multisubunit complexes succinate dehydrogenase (complex II, CII), ubiquinol-cytochrome c oxidoreductase (cytochrome b-c1 complex, complex III, CIII) and cytochrome c oxidase (complex IV, CIV), that cooperate to transfer electrons derived from NADH and succinate to molecular oxygen, creating an electrochemical gradient over the inner membrane that drives transmembrane transport and the ATP synthase. Cytochrome c oxidase is the component of the respiratory chain that catalyzes the reduction of oxygen to water. Electrons originating from reduced cytochrome c in the intermembrane space (IMS) are transferred via the dinuclear copper A center (CU(A)) of subunit 2 and heme A of subunit 1 to the active site in subunit 1, a binuclear center (BNC) formed by heme A3 and copper B (CU(B)). The BNC reduces molecular oxygen to 2 water molecules using 4 electrons from cytochrome c in the IMS and 4 protons from the mitochondrial matrix. The chain is Cytochrome c oxidase subunit 3 (MT-CO3) from Tachyglossus aculeatus aculeatus (Southeast Australian short-beaked echidna).